Reading from the N-terminus, the 1063-residue chain is Cellulose synthase A catalytic subunit 7 [UDP-forming] (1063 aa).

Topologically, residues 1–213 (MDTASVTGGE…IPSSKINPYR (213 aa)) are cytoplasmic. C18, C21, C37, C40, C45, C48, C60, and C63 together coordinate Zn(2+). An RING-type; degenerate zinc finger spans residues 18-64 (CRVCGEEVAAREDGKPFVACAECGFPVCKPCYEYERSEGTQCCPQCN). Residues 116 to 154 (NGEQPAQKWRPGGPALSSFTGSVAGKDLEQEREMEGGME) form a disordered region. Residues 141–154 (KDLEQEREMEGGME) are compositionally biased toward basic and acidic residues. Residues 214–234 (IVIVLRLVVLCFFLKFRITTP) form a helical membrane-spanning segment. Residues 235–237 (AMD) are Extracellular-facing. A helical membrane pass occupies residues 238 to 258 (AVPLWLASVICELWFALSWIL). The Cytoplasmic portion of the chain corresponds to 259-845 (DQLPKWSPVT…TNTIVYPFTS (587 aa)). UDP-alpha-D-glucose-binding residues include S297, K303, E304, and D333. Residue D333 is part of the active site. Residues 387 to 414 (VKERRAMKREYEEFKVRINALVAKAQKK) are a coiled coil. A UDP-alpha-D-glucose-binding site is contributed by K474. Mn(2+) is bound by residues K475 and D499. Residue D762 is part of the active site. Residues 846 to 866 (IPLLAYCTIPAVCLLTGKFII) form a helical membrane-spanning segment. Residues 867-871 (PTLNN) are Extracellular-facing. A helical membrane pass occupies residues 872-892 (LASIWFIALFLSIIATGVLEL). At 893-907 (RWSGVSIEDWWRNEQ) the chain is on the cytoplasmic side. A helical membrane pass occupies residues 908 to 928 (FWVIGGVSAHLFAVFQGLLKV). Residues 929–959 (LGGVDTNFTVTSKAAADETDAFGELYLFKWT) are Extracellular-facing. The N-linked (GlcNAc...) asparagine glycan is linked to N935. A helical membrane pass occupies residues 960 to 980 (TLLVPPTTLIIINMVGIVAGV). Residues 981 to 991 (SDAVNNGYGSW) lie on the Cytoplasmic side of the membrane. The helical transmembrane segment at 992–1012 (GPLFGKLFFSFWVILHLYPFL) threads the bilayer. Residues 1013–1021 (KGLMGRQNR) are Extracellular-facing. A helical membrane pass occupies residues 1022–1042 (TPTIVVLWSILLASIFSLVWV). At 1043–1063 (RIDPFIPKPKGPVLKPCGVSC) the chain is on the cytoplasmic side.

The protein belongs to the glycosyltransferase 2 family. Plant cellulose synthase subfamily. Mn(2+) serves as cofactor. The cofactor is Zn(2+).

Its subcellular location is the cell membrane. The enzyme catalyses [(1-&gt;4)-beta-D-glucosyl](n) + UDP-alpha-D-glucose = [(1-&gt;4)-beta-D-glucosyl](n+1) + UDP + H(+). The protein operates within glycan metabolism; plant cellulose biosynthesis. Catalytic subunit of cellulose synthase terminal complexes ('rosettes'), required for beta-1,4-glucan microfibril crystallization, a major mechanism of the cell wall formation. Involved in the secondary cell wall formation. This chain is Cellulose synthase A catalytic subunit 7 [UDP-forming] (CESA7), found in Oryza sativa subsp. japonica (Rice).